Consider the following 28-residue polypeptide: GCIEIGGDCDGYQEKSYCQCCRNNGFCS.

It belongs to the neurotoxin 04 (omega-agtx) family. 03 (type II/III omega-agtx) subfamily. Expressed by the venom gland.

The protein resides in the secreted. Omega-agatoxin are antagonist of voltage-gated calcium channels. They block insect neuromuscular transmission presynaptically. Potent blocker of N-type calcium channels (Cav2.2/CACNA1B). The protein is Omega-agatoxin-Aa2a of Agelenopsis aperta (North American funnel-web spider).